Here is an 830-residue protein sequence, read N- to C-terminus: Vacuolar protein sorting-associated protein 11 homolog (830 aa).

The RING-type; atypical zinc-finger motif lies at 733 to 775 (CDICREMLSMQSIYFLCQHSFHEECLNYKSTKRQEKFLCIICK).

This sequence belongs to the VPS11 family. In terms of assembly, part of the homotypic fusion and vacuole protein sorting (HOPS) complex, composed of Vps16A, car/Vps33A, dor/Vps18, Vps39, Vps11 and lt/Vps41. Unlike in other species, not part of the class C core vacuole/endosome tethering (CORVET) complex.

The protein resides in the late endosome membrane. The protein localises to the lysosome membrane. Functionally, part of the homotypic fusion and vacuole protein sorting (HOPS) tethering complex involved in endo-lysosomal vesicle trafficking and lysosome biogenesis, but unlike in many other species does not form part of the class C core vacuole/endosome tethering (CORVET) complex. The HOPS complex facilitates docking and fusion of lysosomes with late endosomes and several other types of vesicles. The HOPS complex is also involved in autophagy, pigment granule biogenesis and crinophagy (the elimination of unused secretory granules through fusion with lysosomes). The HOPS complex probably instigates autophagosome-lysosome fusion by binding autophagosome-associated Syx17/syntaxin 17 and promoting assembly of the trans-SNARE complex. Independent of Syx17/syntaxin 17, HOPS is involved in biosynthetic transport to lysosomes and lysosome-related organelles such as eye-pigment granules. Required for autophagocytosis-dependent remodeling of myofibrils and transverse-tubules (T-tubules) during metamorphosis. This chain is Vacuolar protein sorting-associated protein 11 homolog, found in Drosophila melanogaster (Fruit fly).